Consider the following 1064-residue polypeptide: Isoleucine--tRNA ligase, cytoplasmic (1064 aa).

A 'HIGH' region motif is present at residues 42-52 (PFATGRPHHGH). The 'KMSKS' region motif lies at 597 to 601 (KMSKR). Lys600 serves as a coordination point for ATP.

It belongs to the class-I aminoacyl-tRNA synthetase family.

The protein resides in the cytoplasm. The catalysed reaction is tRNA(Ile) + L-isoleucine + ATP = L-isoleucyl-tRNA(Ile) + AMP + diphosphate. This is Isoleucine--tRNA ligase, cytoplasmic (irs1) from Schizosaccharomyces pombe (strain 972 / ATCC 24843) (Fission yeast).